A 333-amino-acid polypeptide reads, in one-letter code: DNA-directed RNA polymerase subunit alpha (333 aa).

An alpha N-terminal domain (alpha-NTD) region spans residues 1-234; it reads MQISVNEFLT…QQLAAFVDLK (234 aa). Residues 248 to 333 are alpha C-terminal domain (alpha-CTD); the sequence is IDPILLRPVD…SLKKDDKATA (86 aa).

This sequence belongs to the RNA polymerase alpha chain family. As to quaternary structure, homodimer. The RNAP catalytic core consists of 2 alpha, 1 beta, 1 beta' and 1 omega subunit. When a sigma factor is associated with the core the holoenzyme is formed, which can initiate transcription.

It catalyses the reaction RNA(n) + a ribonucleoside 5'-triphosphate = RNA(n+1) + diphosphate. DNA-dependent RNA polymerase catalyzes the transcription of DNA into RNA using the four ribonucleoside triphosphates as substrates. In Pseudomonas entomophila (strain L48), this protein is DNA-directed RNA polymerase subunit alpha.